The sequence spans 326 residues: GMP reductase (326 aa).

Cys175 acts as the Thioimidate intermediate in catalysis. 204–227 (IIADGGIRTHGDIAKSIRFGATMV) is an NADP(+) binding site.

The protein belongs to the IMPDH/GMPR family. GuaC type 2 subfamily.

The catalysed reaction is IMP + NH4(+) + NADP(+) = GMP + NADPH + 2 H(+). Catalyzes the irreversible NADPH-dependent deamination of GMP to IMP. It functions in the conversion of nucleobase, nucleoside and nucleotide derivatives of G to A nucleotides, and in maintaining the intracellular balance of A and G nucleotides. This Bacillus subtilis (strain 168) protein is GMP reductase (guaC).